The sequence spans 253 residues: Type III pantothenate kinase (253 aa).

6 to 13 (DVGNTNIV) contacts ATP. A substrate-binding site is contributed by 107–110 (GADR). The active-site Proton acceptor is the D109. K(+) is bound at residue D129. Residue T132 coordinates ATP. T184 is a substrate binding site.

The protein belongs to the type III pantothenate kinase family. As to quaternary structure, homodimer. NH4(+) serves as cofactor. The cofactor is K(+).

It is found in the cytoplasm. The catalysed reaction is (R)-pantothenate + ATP = (R)-4'-phosphopantothenate + ADP + H(+). It participates in cofactor biosynthesis; coenzyme A biosynthesis; CoA from (R)-pantothenate: step 1/5. Catalyzes the phosphorylation of pantothenate (Pan), the first step in CoA biosynthesis. This Exiguobacterium sibiricum (strain DSM 17290 / CCUG 55495 / CIP 109462 / JCM 13490 / 255-15) protein is Type III pantothenate kinase.